Consider the following 637-residue polypeptide: Formate--tetrahydrofolate ligase (637 aa).

Residue T81–S88 participates in ATP binding.

This sequence belongs to the formate--tetrahydrofolate ligase family. Homodimer.

The catalysed reaction is (6S)-5,6,7,8-tetrahydrofolate + formate + ATP = (6R)-10-formyltetrahydrofolate + ADP + phosphate. Its pathway is one-carbon metabolism; tetrahydrofolate interconversion. The protein is Formate--tetrahydrofolate ligase of Spinacia oleracea (Spinach).